Reading from the N-terminus, the 728-residue chain is 1,4-alpha-glucan branching enzyme GlgB (728 aa).

Aspartate 405 functions as the Nucleophile in the catalytic mechanism. Catalysis depends on glutamate 458, which acts as the Proton donor.

Belongs to the glycosyl hydrolase 13 family. GlgB subfamily. In terms of assembly, monomer.

The catalysed reaction is Transfers a segment of a (1-&gt;4)-alpha-D-glucan chain to a primary hydroxy group in a similar glucan chain.. The protein operates within glycan biosynthesis; glycogen biosynthesis. Functionally, catalyzes the formation of the alpha-1,6-glucosidic linkages in glycogen by scission of a 1,4-alpha-linked oligosaccharide from growing alpha-1,4-glucan chains and the subsequent attachment of the oligosaccharide to the alpha-1,6 position. The protein is 1,4-alpha-glucan branching enzyme GlgB of Salmonella arizonae (strain ATCC BAA-731 / CDC346-86 / RSK2980).